A 514-amino-acid chain; its full sequence is 2,3-bisphosphoglycerate-independent phosphoglycerate mutase (514 aa).

2 residues coordinate Mn(2+): aspartate 14 and serine 64. Serine 64 (phosphoserine intermediate) is an active-site residue. Substrate contacts are provided by residues histidine 125, 155–156, arginine 187, arginine 193, 263–266, and lysine 336; these read RD and RADR. Residues aspartate 403, histidine 407, aspartate 444, histidine 445, and histidine 463 each contribute to the Mn(2+) site.

The protein belongs to the BPG-independent phosphoglycerate mutase family. Monomer. Mn(2+) is required as a cofactor.

It catalyses the reaction (2R)-2-phosphoglycerate = (2R)-3-phosphoglycerate. Its pathway is carbohydrate degradation; glycolysis; pyruvate from D-glyceraldehyde 3-phosphate: step 3/5. In terms of biological role, catalyzes the interconversion of 2-phosphoglycerate and 3-phosphoglycerate. The protein is 2,3-bisphosphoglycerate-independent phosphoglycerate mutase of Escherichia coli (strain ATCC 8739 / DSM 1576 / NBRC 3972 / NCIMB 8545 / WDCM 00012 / Crooks).